We begin with the raw amino-acid sequence, 2492 residues long: Polyketide synthase 19 (2492 aa).

Residues 12–463 (REPIAIVGTS…GTNAHAIVES (452 aa)) form the Ketosynthase family 3 (KS3) domain. Catalysis depends on for beta-ketoacyl synthase activity residues Cys-202, His-341, and His-383. Residues 571-866 (VFTGQGAQWA…LEVGPHPALK (296 aa)) form a malonyl-CoA:ACP transacylase (MAT) domain region. The tract at residues 967 to 1110 (HELLGRSVSH…GRIRLWLEQP (144 aa)) is N-terminal hotdog fold. The dehydratase (DH) domain stretch occupies residues 967–1270 (HELLGRSVSH…GVQMTAIGKP (304 aa)). A PKS/mFAS DH domain is found at 967 to 1273 (HELLGRSVSH…MTAIGKPPDR (307 aa)). The active-site Proton acceptor; for dehydratase activity is the His-1001. Positions 1125–1273 (MSELNMAQVY…MTAIGKPPDR (149 aa)) are C-terminal hotdog fold. Asp-1183 serves as the catalytic Proton donor; for dehydratase activity. Residues 1431-1604 (LGAIVKQLGH…KTTGFSGVDI (174 aa)) are C-methyltransferase (CMeT) domain. A ketoreductase (KR) domain region spans residues 2118–2293 (SYLLFGMTGD…AGSIVHISVL (176 aa)). The 76-residue stretch at 2404-2479 (PILEKRFAQA…RVCDDVLVDW (76 aa)) folds into the Carrier domain. Ser-2438 is modified (O-(pantetheine 4'-phosphoryl)serine).

Functionally, highly reducing polyketide synthase; part of the gene cluster that mediates the biosynthesis of fujikurins A-D, secondary metabolites playing a role during rice infection. The polyketide synthase PKS19 acts with the trans-enoyl reductase FFUJ_12240 and the polyketide transferase FFUJ_12241 to produce fujikurins, however, the biosynthesis pathway has not been identified yet. The polypeptide is Polyketide synthase 19 (Gibberella fujikuroi (strain CBS 195.34 / IMI 58289 / NRRL A-6831) (Bakanae and foot rot disease fungus)).